Consider the following 752-residue polypeptide: Polyribonucleotide nucleotidyltransferase (752 aa).

Mg(2+)-binding residues include Asp529 and Asp535. Residues 595–654 (PRVTTIKVPVDKIGEVIGPKGKVINAITEETGAQISIEDDGTVFVGATDGPSAQAAIDKI) enclose the KH domain. In terms of domain architecture, S1 motif spans 666–735 (GERFLGTVVK…KRGKISLILV (70 aa)).

Belongs to the polyribonucleotide nucleotidyltransferase family. Mg(2+) serves as cofactor.

The protein localises to the cytoplasm. The catalysed reaction is RNA(n+1) + phosphate = RNA(n) + a ribonucleoside 5'-diphosphate. Involved in mRNA degradation. Catalyzes the phosphorolysis of single-stranded polyribonucleotides processively in the 3'- to 5'-direction. In Mycobacterium tuberculosis (strain ATCC 25177 / H37Ra), this protein is Polyribonucleotide nucleotidyltransferase.